A 340-amino-acid polypeptide reads, in one-letter code: Oxygen-dependent coproporphyrinogen-III oxidase (340 aa).

Residues 1-14 show a composition bias toward polar residues; it reads MTVSPTTQPQTNHS. Positions 1 to 22 are disordered; the sequence is MTVSPTTQPQTNHSLPPADAKQ. Serine 109 contributes to the substrate binding site. A divalent metal cation contacts are provided by histidine 113 and histidine 123. Residue histidine 123 is the Proton donor of the active site. Substrate is bound at residue 125 to 127; it reads NYR. A divalent metal cation-binding residues include histidine 157 and histidine 187. The interval 278-313 is important for dimerization; the sequence is YVEFNLVYDRGTIFGLQTNGRTESILMSLPPLVRWQ. Residue 296–298 coordinates substrate; the sequence is NGR.

Belongs to the aerobic coproporphyrinogen-III oxidase family. As to quaternary structure, homodimer. It depends on a divalent metal cation as a cofactor.

The protein localises to the cytoplasm. The enzyme catalyses coproporphyrinogen III + O2 + 2 H(+) = protoporphyrinogen IX + 2 CO2 + 2 H2O. It participates in porphyrin-containing compound metabolism; protoporphyrin-IX biosynthesis; protoporphyrinogen-IX from coproporphyrinogen-III (O2 route): step 1/1. In terms of biological role, involved in the heme and chlorophyll biosynthesis. Catalyzes the aerobic oxidative decarboxylation of propionate groups of rings A and B of coproporphyrinogen-III to yield the vinyl groups in protoporphyrinogen-IX. The polypeptide is Oxygen-dependent coproporphyrinogen-III oxidase (Synechocystis sp. (strain ATCC 27184 / PCC 6803 / Kazusa)).